The chain runs to 340 residues: Holliday junction branch migration complex subunit RuvB (340 aa).

Positions Thr4–Tyr184 are large ATPase domain (RuvB-L). ATP contacts are provided by residues Arg24, Gly65, Lys68, Thr69, Thr70, Glu131–Phe133, Arg174, Tyr184, and Arg221. Residue Thr69 participates in Mg(2+) binding. The interval Ser185–Glu255 is small ATPAse domain (RuvB-S). Residues Pro258–Glu340 form a head domain (RuvB-H) region. DNA contacts are provided by Arg294, Arg313, and Arg318.

Belongs to the RuvB family. In terms of assembly, homohexamer. Forms an RuvA(8)-RuvB(12)-Holliday junction (HJ) complex. HJ DNA is sandwiched between 2 RuvA tetramers; dsDNA enters through RuvA and exits via RuvB. An RuvB hexamer assembles on each DNA strand where it exits the tetramer. Each RuvB hexamer is contacted by two RuvA subunits (via domain III) on 2 adjacent RuvB subunits; this complex drives branch migration. In the full resolvosome a probable DNA-RuvA(4)-RuvB(12)-RuvC(2) complex forms which resolves the HJ.

Its subcellular location is the cytoplasm. It catalyses the reaction ATP + H2O = ADP + phosphate + H(+). The RuvA-RuvB-RuvC complex processes Holliday junction (HJ) DNA during genetic recombination and DNA repair, while the RuvA-RuvB complex plays an important role in the rescue of blocked DNA replication forks via replication fork reversal (RFR). RuvA specifically binds to HJ cruciform DNA, conferring on it an open structure. The RuvB hexamer acts as an ATP-dependent pump, pulling dsDNA into and through the RuvAB complex. RuvB forms 2 homohexamers on either side of HJ DNA bound by 1 or 2 RuvA tetramers; 4 subunits per hexamer contact DNA at a time. Coordinated motions by a converter formed by DNA-disengaged RuvB subunits stimulates ATP hydrolysis and nucleotide exchange. Immobilization of the converter enables RuvB to convert the ATP-contained energy into a lever motion, pulling 2 nucleotides of DNA out of the RuvA tetramer per ATP hydrolyzed, thus driving DNA branch migration. The RuvB motors rotate together with the DNA substrate, which together with the progressing nucleotide cycle form the mechanistic basis for DNA recombination by continuous HJ branch migration. Branch migration allows RuvC to scan DNA until it finds its consensus sequence, where it cleaves and resolves cruciform DNA. The sequence is that of Holliday junction branch migration complex subunit RuvB from Hydrogenovibrio crunogenus (strain DSM 25203 / XCL-2) (Thiomicrospira crunogena).